A 273-amino-acid chain; its full sequence is Formamidopyrimidine-DNA glycosylase (273 aa).

Catalysis depends on Pro2, which acts as the Schiff-base intermediate with DNA. The Proton donor role is filled by Glu3. Residue Lys58 is the Proton donor; for beta-elimination activity of the active site. The DNA site is built by His91 and Arg110. An FPG-type zinc finger spans residues 238–272 (QVYGKTGQPCPRCASMIVKIKLGGRGTHLCPHCQK). Residue Arg262 is the Proton donor; for delta-elimination activity of the active site.

This sequence belongs to the FPG family. Monomer. Requires Zn(2+) as cofactor.

The enzyme catalyses Hydrolysis of DNA containing ring-opened 7-methylguanine residues, releasing 2,6-diamino-4-hydroxy-5-(N-methyl)formamidopyrimidine.. It catalyses the reaction 2'-deoxyribonucleotide-(2'-deoxyribose 5'-phosphate)-2'-deoxyribonucleotide-DNA = a 3'-end 2'-deoxyribonucleotide-(2,3-dehydro-2,3-deoxyribose 5'-phosphate)-DNA + a 5'-end 5'-phospho-2'-deoxyribonucleoside-DNA + H(+). Functionally, involved in base excision repair of DNA damaged by oxidation or by mutagenic agents. Acts as a DNA glycosylase that recognizes and removes damaged bases. Has a preference for oxidized purines, such as 7,8-dihydro-8-oxoguanine (8-oxoG). Has AP (apurinic/apyrimidinic) lyase activity and introduces nicks in the DNA strand. Cleaves the DNA backbone by beta-delta elimination to generate a single-strand break at the site of the removed base with both 3'- and 5'-phosphates. This chain is Formamidopyrimidine-DNA glycosylase, found in Streptococcus thermophilus (strain ATCC BAA-250 / LMG 18311).